A 601-amino-acid chain; its full sequence is MCGITGYIGTDPTGRIVHEGLQNLEYRGYDSAGIALAGGGSLSVHKTGGEVGDLPVPSREDGTRGIGHTRWSTHGEPTRENAHPHTDCTGDVAVVHNGIIENYAALADELRADHVFHSDTDTEVVPHLIETHLADGVSLLTAVQRTTERLTGSYALAITAAGHDGIVVARSDSPLLLGHGDTGTFVASDATAFIEHTNRVTYLRNGDIAHLTETEWTVYNDGARVSRDIEALDWSADAAGKSGYDHYMLKEIHEQPRALRQAISGRISDLGTDVTLDMELSTETLQNVAELQIVACGTSYHAGLYAKELLETHADLPVTVHVASEYELRGGRSPEDTLVVAITQSGETADTLAALRSAAQKGAPTLALTNTLGSTVTREADDALFIRAGPEIGVAATKTFVSQVATAALLTMHIGRARNAISTGDAAALRDAIRDLPGAVQQVLDQAPEIASIGREYADSDAFFYVGRRAGRPVALESALKLKEISYDHAEGFSAGELKHGPLALVTDNTPVVAVLTEYAAPERTANNVKEVQSRGADVIGLASDAGTARHADVTITLPACGPLEPVVANVALQLFAYHIANEKGRPIDKPRNLAKSVTVE.

Cys-2 serves as the catalytic Nucleophile; for GATase activity. Positions Cys-2 to Thr-214 constitute a Glutamine amidotransferase type-2 domain. SIS domains are found at residues Ser-281–Ala-420 and Ile-453–Pro-591. Residue Lys-596 is the For Fru-6P isomerization activity of the active site.

Homodimer.

The protein resides in the cytoplasm. The enzyme catalyses D-fructose 6-phosphate + L-glutamine = D-glucosamine 6-phosphate + L-glutamate. In terms of biological role, catalyzes the first step in hexosamine metabolism, converting fructose-6P into glucosamine-6P using glutamine as a nitrogen source. This Halobacterium salinarum (strain ATCC 700922 / JCM 11081 / NRC-1) (Halobacterium halobium) protein is Glutamine--fructose-6-phosphate aminotransferase [isomerizing].